The following is a 465-amino-acid chain: MLLLWILSLFLETVAGGEVCFDRLGCFSDNKPWAGTSERPRKGLPWDPSAINVRFLLYTNENPNNYQRITADSSVIRSSDFKTDRKTRFIIHGFIDKGEENWLADLCKALFQVESVNCICVDWRGGSRTLYSQASQNIQVVGAEVAYLINFLQSQLDYPPSSVHIIGHSLGSHAAGEAGRRTNGAIGRITGLDPAEPYFQYTPEIVRLDPSDAQFVDVIHTDGNPIIPNLGFGMSQTVGHLDFFPNGGLQMPGCQKNILSQIVDIDGIWEGTRDFAACNHLRSYKYYIDSITNPKGFAGFSCDSYSSFSSNKCFPCATGECPQMGHYADKFPGKTKENFQNFYLNTGDKSNFSRWRYRIAVTLSGQKVTGHVLVSLFGDAGNTKQYEIYRGSLKPGNNHSNEIDSDVDVGDLQKVKFIWYNNVINITLPKVGASRITVTRSDGRVFDFCSQDTVREEVLLTLQPC.

Residues 1–16 form the signal peptide; it reads MLLLWILSLFLETVAG. 2 disulfides stabilise this stretch: Cys-20-Cys-26 and Cys-107-Cys-118. Catalysis depends on Ser-169, which acts as the Nucleophile. Asp-193 (charge relay system) is an active-site residue. 4 residues coordinate Ca(2+): Glu-204, Arg-207, Asp-209, and Asp-212. The cysteines at positions 254 and 278 are disulfide-linked. Residue His-280 is the Charge relay system of the active site. Cystine bridges form between Cys-302-Cys-313 and Cys-316-Cys-321. Residues Asn-351, Asn-398, and Asn-425 are each glycosylated (N-linked (GlcNAc...) asparagine). Positions 355–465 constitute a PLAT domain; that stretch reads WRYRIAVTLS…EEVLLTLQPC (111 aa). A disulfide bridge links Cys-449 with Cys-465.

This sequence belongs to the AB hydrolase superfamily. Lipase family. As to quaternary structure, forms a 1:1 stoichiometric complex with (pro)colipase/CLPS.

Its subcellular location is the secreted. It catalyses the reaction a triacylglycerol + H2O = a diacylglycerol + a fatty acid + H(+). The enzyme catalyses 1,2,3-tributanoylglycerol + H2O = dibutanoylglycerol + butanoate + H(+). The catalysed reaction is 1,2,3-tri-(9Z-octadecenoyl)-glycerol + H2O = di-(9Z)-octadecenoylglycerol + (9Z)-octadecenoate + H(+). It carries out the reaction all-trans-retinyl hexadecanoate + H2O = all-trans-retinol + hexadecanoate + H(+). It catalyses the reaction 1,2-di-(9Z-octadecenoyl)-glycerol + H2O = (9Z-octadecenoyl)-glycerol + (9Z)-octadecenoate + H(+). Its activity is regulated as follows. Inhibited by bile salts, is reactivated by (pro)colipase/CLPS. Functionally, plays an important role in fat metabolism. It preferentially splits the esters of long-chain fatty acids at positions 1 and 3, producing mainly 2-monoacylglycerol and free fatty acids, and shows considerably higher activity against insoluble emulsified substrates than against soluble ones. This is Pancreatic triacylglycerol lipase (PNLIP) from Cavia porcellus (Guinea pig).